A 285-amino-acid polypeptide reads, in one-letter code: CCR4-NOT transcription complex subunit 7 (285 aa).

Residues Asp40, Glu42, Asp161, Asp230, and Glu278 each coordinate a divalent metal cation.

The protein belongs to the CAF1 family. As to quaternary structure, component of the CCR4-NOT complex. It depends on Mn(2+) as a cofactor. The cofactor is Mg(2+). Co(2+) is required as a cofactor.

It localises to the nucleus. The protein localises to the cytoplasm. The catalysed reaction is Exonucleolytic cleavage of poly(A) to 5'-AMP.. Has 3'-5' poly(A) exoribonuclease activity for synthetic poly(A) RNA substrate. Catalytic component of the CCR4-NOT complex which is one of the major cellular mRNA deadenylases and is linked to various cellular processes including bulk mRNA degradation, miRNA-mediated repression, translational repression during translational initiation and general transcription regulation. During miRNA-mediated repression the complex also seems to act as translational repressor during translational initiation. Additional complex functions may be a consequence of its influence on mRNA expression. This is CCR4-NOT transcription complex subunit 7 (cnot7) from Xenopus laevis (African clawed frog).